The following is a 141-amino-acid chain: Ly6/PLAUR domain-containing protein 1 (141 aa).

Residues 1–20 (MWVLGIAATFCGLFWLPGLA) form the signal peptide. 6 disulfides stabilise this stretch: C25–C54, C28–C37, C46–C71, C77–C100, C88–C97, and C101–C106. The UPAR/Ly6 domain maps to 25 to 107 (CYQCEEFQLN…ISCCNTPLCN (83 aa)). N-linked (GlcNAc...) asparagine glycosylation occurs at N45. The GPI-anchor amidated glycine moiety is linked to residue G115. Residues 116 to 141 (SSASAIRPGLLTTLLFFHLALCLAHC) constitute a propeptide, removed in mature form.

In terms of assembly, interacts with CHRNA4 and nAChRs containing alpha-4:beta-2 (CHRNA4:CHRNB2) and alpha-7 (CHRNA7) subunits. Preferentially expressed in the nervous system. Expressed in embryonic and postnatal postmitotic central and peripheral neurons including subpopulations of motor neurons, sensory neurons, interneurons and neurons of the autonomous nervous system. Expressed around the growing nerves in the limb bud. Expressed at high levels in specific brain regions such as the prefrontal cortex, amygdala, hippocampus, mediodorsal thalamus, dentate gyrus and specific brainstem nuclei (at protein level).

The protein resides in the cell membrane. Its function is as follows. Believed to act as a modulator of nicotinic acetylcholine receptors (nAChRs) activity. In vitro increases receptor desensitization and decreases affinity for ACh of alpha-4:beta-2-containing nAChRs. May play a role in the intracellular trafficking of alpha-4:beta-2 and alpha-7-containing nAChRs and may inhibit their expression at the cell surface. May be involved in the control of anxiety. In Mus musculus (Mouse), this protein is Ly6/PLAUR domain-containing protein 1 (Lypd1).